A 335-amino-acid polypeptide reads, in one-letter code: Cell division protein ZipA (335 aa).

At 1–4 the chain is on the periplasmic side; sequence MDLN. The helical transmembrane segment at 5–25 threads the bilayer; the sequence is AILIILGVIALIILVAHGIWS. At 26–335 the chain is on the cytoplasmic side; the sequence is NRREKSQYFE…AERDYLARVS (310 aa).

Belongs to the ZipA family. Interacts with FtsZ via their C-terminal domains.

It is found in the cell inner membrane. In terms of biological role, essential cell division protein that stabilizes the FtsZ protofilaments by cross-linking them and that serves as a cytoplasmic membrane anchor for the Z ring. Also required for the recruitment to the septal ring of downstream cell division proteins. The chain is Cell division protein ZipA from Histophilus somni (strain 2336) (Haemophilus somnus).